Reading from the N-terminus, the 539-residue chain is 2-isopropylmalate synthase (539 aa).

The Pyruvate carboxyltransferase domain maps to 8 to 269; that stretch reads VLIFDTTLRD…YFNPFFGRPP (262 aa). Residues Asp17, His208, His210, and Asn244 each contribute to the Mn(2+) site. Positions 408-539 are regulatory domain; sequence QLKLVQVSCG…DLAKVDKKGI (132 aa).

Belongs to the alpha-IPM synthase/homocitrate synthase family. LeuA type 1 subfamily. As to quaternary structure, homodimer. Mn(2+) is required as a cofactor.

Its subcellular location is the cytoplasm. It carries out the reaction 3-methyl-2-oxobutanoate + acetyl-CoA + H2O = (2S)-2-isopropylmalate + CoA + H(+). The protein operates within amino-acid biosynthesis; L-leucine biosynthesis; L-leucine from 3-methyl-2-oxobutanoate: step 1/4. Catalyzes the condensation of the acetyl group of acetyl-CoA with 3-methyl-2-oxobutanoate (2-ketoisovalerate) to form 3-carboxy-3-hydroxy-4-methylpentanoate (2-isopropylmalate). The polypeptide is 2-isopropylmalate synthase (Prochlorococcus marinus (strain NATL1A)).